A 543-amino-acid chain; its full sequence is Sodium/glucose cotransporter (543 aa).

A run of 14 helical transmembrane segments spans residues 10-30, 45-65, 79-99, 129-149, 156-176, 193-213, 246-266, 287-307, 345-365, 401-421, 427-447, 455-475, 483-503, and 523-543; these read FIDIMVFAIYVAIIIGVGLWV, FLAGKSLPWWAVGASLIAANI, SIGLAIASYEWMSAITLIIVG, ILAVFWISLYIFVNLTSVLYL, TILGIPLMYSILGLALFALVY, VFFLVLGGFMTTYMAVSFIGG, LPGIAVLIGGLWVANLYYWGF, IVFAAFLKLIVPFLVVLPGIA, FLPVGVKGVVFAALAAAIVSS, TAAVVALIIACLIAPMLGGIG, IQEYTGLVSPGILAVFLLGLF, GAIIGVVASIPFALFLKFMPL, MLYTLLFTMVVIAFTSLSTSI, and SFNIAAYGIMIVLAVLYTLFW.

The protein localises to the cell membrane. In terms of biological role, actively transports glucose into cells by Na(+) cotransport. The chain is Sodium/glucose cotransporter (sglT) from Vibrio parahaemolyticus.